The following is a 111-amino-acid chain: UPF0060 membrane protein Krad_3114 (111 aa).

A run of 4 helical transmembrane segments spans residues 7-27 (IALF…VWQG), 33-53 (GLAW…AATL), 62-82 (VLAA…AVVD), and 88-108 (RFDV…MYAP).

It belongs to the UPF0060 family.

It localises to the cell membrane. The chain is UPF0060 membrane protein Krad_3114 from Kineococcus radiotolerans (strain ATCC BAA-149 / DSM 14245 / SRS30216).